An 86-amino-acid polypeptide reads, in one-letter code: Cell division topological specificity factor (86 aa).

It belongs to the MinE family.

Prevents the cell division inhibition by proteins MinC and MinD at internal division sites while permitting inhibition at polar sites. This ensures cell division at the proper site by restricting the formation of a division septum at the midpoint of the long axis of the cell. The polypeptide is Cell division topological specificity factor (Polaromonas sp. (strain JS666 / ATCC BAA-500)).